The primary structure comprises 4558 residues: Multifunctional-autoprocessing repeats-in-toxin (4558 aa).

A signal peptide spans 1–32 (MVFYLIPKRRVWLMGKPFWRSVEYFFTGNYSA). RtxA repeat units follow at residues 114 to 131 (GAAG…GDVS), 134 to 151 (GAAA…GNVT), 154 to 170 (GAGG…QGNL), 174 to 197 (GAGA…GDVT), 200 to 217 (GAGA…GNIT), 220 to 237 (GAGA…GDIT), 268 to 285 (GVGG…GDIH), 288 to 304 (GGGA…GNDF), 594 to 611 (GAGG…GNVH), 614 to 630 (GGGI…FGNT), 634 to 651 (GGGA…GDLT), 654 to 668 (GAGL…SEQG), 751 to 763 (AGGA…MGEG), 769 to 781 (MLGG…HISN), 792 to 808 (ALGG…GNTL), 811 to 826 (MGGG…DGTT), 830 to 845 (MVGG…NGDT), 851 to 865 (GVGN…GQTL), 868 to 885 (MGAA…TSIA), 887 to 901 (MIGA…GEGN), 906 to 920 (MGGL…GNGD), 925 to 942 (MVAE…MSVA), 944 to 960 (MLAK…GTTL), 982 to 994 (MIGQ…KVGN), 1001 to 1016 (MVGK…DGTS), 1041 to 1053 (GKAN…GDGL), 1077 to 1089 (AAAK…HVGD), 1097 to 1112 (AGKG…GTTV), 1120 to 1132 (GNVM…GTTI), 1135 to 1152 (AKGK…LGVN), 1155 to 1169 (WGQA…DGDR), 1173 to 1189 (AKGE…GQEV), 1194 to 1209 (GEAN…DDYT), 1211 to 1227 (AWGK…GQNV), 1230 to 1246 (AKGE…GDSF), 1252 to 1266 (KGNI…MQVT), 1268 to 1285 (AKGQ…LNVT), 1306 to 1323 (AWGK…LNVA), and 1325 to 1342 (MKGK…LNIN). Disordered regions lie at residues 1623–1688 (HATQ…KEES), 1752–1779 (TLSD…QNRA), and 1791–1890 (DAEK…NADG). Residues 1625–1634 (TQNPAAQNAL) show a composition bias toward polar residues. The span at 1635–1654 (SDKERAEADRQRLEQEKQKQ) shows a compositional bias: basic and acidic residues. Residues 1660 to 1679 (GSQSQLESTDQQALENNGQA) are compositionally biased toward polar residues. A compositionally biased stretch (basic and acidic residues) spans 1791-1815 (DAEKRKADALAKGKDAQQAESDAHH). Positions 1879–1888 (HVNTDSQTNA) are enriched in polar residues. Residues 1988 to 2422 (VPGFKSHFAS…HAEQWAKITA (435 aa)) form the ACD domain. ATP is bound at residue 1999 to 2003 (SIGIE). The Mg(2+) site is built by glutamate 2003, glutamate 2065, and glutamine 2149. Arginine 2255 provides a ligand contact to ATP. Mg(2+) is bound at residue glutamate 2326. Residues 2574–2658 (ELMSVTELLD…SLLNQVNTRL (85 aa)) form a membrane localization region (MLD) region. Residues 2734 to 3098 (EYGQTVADTI…HQVTDVLDAL (365 aa)) are rho inactivation domain (RID). Positions 3195–3310 (VVLFLHGSGS…MPSMTKAITA (116 aa)) are ABH effector region. The tract at residues 3404–3426 (ASVDEDLDQQGLDTTSTKDQGIS) is disordered. Polar residues predominate over residues 3414-3426 (GLDTTSTKDQGIS). In terms of domain architecture, Peptidase C80 spans 3462–3646 (PTTDGGETRF…AENNKVSLSW (185 aa)). Residues 3468-3470 (ETR), 3495-3496 (KH), and arginine 3526 each bind 1D-myo-inositol hexakisphosphate. Histidine 3532 (for cysteine protease activity) is an active-site residue. Residue serine 3577 participates in 1D-myo-inositol hexakisphosphate binding. The Nucleophile; for cysteine protease activity role is filled by cysteine 3581. 1D-myo-inositol hexakisphosphate contacts are provided by residues 3610–3612 (SVR), 3623–3624 (RK), lysine 3636, and lysine 3641.

Requires Mg(2+) as cofactor.

It localises to the secreted. The protein localises to the host cytoplasm. It is found in the host cytosol. The protein resides in the host cell membrane. The enzyme catalyses L-lysyl-/S-(2E,6E,10E)-geranylgeranyl-L-cysteinyl-[protein] + hexadecanoyl-CoA = N(6)-hexadecanoyl-L-lysyl-/S-(2E,6E,10E)-geranylgeranyl-L-cysteinyl-[protein] + CoA + H(+). It catalyses the reaction L-lysyl-/S-(2E,6E,10E)-geranylgeranyl-L-cysteinyl-[protein] + dodecanoyl-CoA = N(6)-dodecanoyl-L-lysyl-/S-(2E,6E,10E)-geranylgeranyl-L-cysteinyl-[protein] + CoA + H(+). It carries out the reaction L-lysyl-/S-(2E,6E,10E)-geranylgeranyl-L-cysteinyl-[protein] + decanoyl-CoA = N(6)-decanoyl-L-lysyl-/S-(2E,6E,10E)-geranylgeranyl-L-cysteinyl-[protein] + CoA + H(+). Its activity is regulated as follows. Protease activity is inhibited by N-ethylmaleimide but not other protease inhibitors. Protease activity is inhibited by aza-leucine epoxide. Protease activity is activated upon binding inositol hexakisphosphate (InsP6) via an allosteric mechanism: the active site is disordered or occluded in the absence of InsP6, protecting the protease active-site sulfhydryl until the toxin enters a eukaryotic cell. Upon processing at the Leu-3441-Ala-3442 site, the peptidase C80 domain is converted to a form with much reduced affinity for InsP6, but is reactivated for high affinity binding of InsP6 by cooperative binding of both a new substrate and InsP6. Reactivation allows cleavage at other sites, specifically at Leu residues between the effector domains. Its function is as follows. Precursor of a multifunctional toxin that causes destruction of the actin cytoskeleton by covalent cross-linking of actin and inactivation of Rho GTPases when translocated into the host cytoplasm. Upon translocation into the host cell, undergoes autoprocessing in cis mediated by the peptidase C80 domain (also named CPD domain): the protease activity is activated upon binding inositol hexakisphosphate (InsP6) present at the host cell membrane and delivers the Cysteine protease domain-containing toxin F3 chain to the host cytosol. The Cysteine protease domain-containing toxin F3 chain will then further cleave and release effector toxin chains that cause disassembly of the actin cytoskeleton and enhance V.cholerae colonization of the small intestine, possibly by facilitating evasion of phagocytic cells. Following autocatalytic cleavage in cis at the Leu-3441-Ala-3442 site, this chain mediates processing in trans to release other individual toxin chains to the host cytosol. Released effector toxin chains cause disassembly of the actin cytoskeleton and enhance V.cholerae colonization of the small intestine, possibly by facilitating evasion of phagocytic cells. In terms of biological role, actin-directed toxin that catalyzes the covalent cross-linking of host cytoplasmic monomeric actin. Mediates the cross-link between 'Lys-50' of one monomer and 'Glu-270' of another actin monomer, resulting in formation of highly toxic actin oligomers that cause cell rounding. The toxin can be highly efficient at very low concentrations by acting on formin homology family proteins: toxic actin oligomers bind with high affinity to formins and adversely affect both nucleation and elongation abilities of formins, causing their potent inhibition in both profilin-dependent and independent manners. Acts as an acid--amino-acid ligase that transfers the gamma-phosphoryl group of ATP to the 'Glu-270' actin residue, resulting in the formation of an activated acyl phosphate intermediate. This intermediate is further hydrolyzed and the energy of hydrolysis is utilized for the formation of the amide bond between actin subunits. Functionally, N-epsilon-fatty acyltransferase that mediates lysine-palmitoylation of host Rho GTPase proteins, with a strong preference for host Rac1. After delivery to the host cytosol, localizes to the host cell membrane where it palmitoylates host Rho GTPase proteins, resulting in loss of all active GTP-bound Rho and subsequent actin depolymerization. Prenylation of host Rac1 at the C-terminus is required for lysine-palmitoylation. Its function is as follows. Indirectly activates the small GTPase CDC42. This is Multifunctional-autoprocessing repeats-in-toxin from Vibrio cholerae serotype O1 (strain ATCC 39315 / El Tor Inaba N16961).